Here is a 187-residue protein sequence, read N- to C-terminus: Large ribosomal subunit protein uL22 (187 aa).

Belongs to the universal ribosomal protein uL22 family.

The chain is Large ribosomal subunit protein uL22 (RPL17) from Theileria parva (East coast fever infection agent).